A 279-amino-acid polypeptide reads, in one-letter code: Energy-coupling factor transporter ATP-binding protein EcfA (279 aa).

An ABC transporter domain is found at 5–240 (IELEKINYKY…GPELIDLGLD (236 aa)). 40-47 (GHNGSGKS) is a binding site for ATP.

It belongs to the ABC transporter superfamily. Energy-coupling factor EcfA family. As to quaternary structure, forms a stable energy-coupling factor (ECF) transporter complex composed of 2 membrane-embedded substrate-binding proteins (S component), 2 ATP-binding proteins (A component) and 2 transmembrane proteins (T component).

The protein localises to the cell membrane. Its function is as follows. ATP-binding (A) component of a common energy-coupling factor (ECF) ABC-transporter complex. Unlike classic ABC transporters this ECF transporter provides the energy necessary to transport a number of different substrates. The chain is Energy-coupling factor transporter ATP-binding protein EcfA from Enterococcus faecium (Streptococcus faecium).